We begin with the raw amino-acid sequence, 556 residues long: (S)-N-methylcanadine 1-hydroxylase CYP82Y1 (556 aa).

Residues 18 to 38 traverse the membrane as a helical segment; that stretch reads TAVGTLILAFLLTLSPVIIYY. Cys-500 is a heme binding site.

The protein belongs to the cytochrome P450 family. Heme serves as cofactor. In terms of tissue distribution, highly expressed in capsules. Expressed is stems.

It is found in the membrane. The catalysed reaction is (S)-cis-N-methylcanadine + reduced [NADPH--hemoprotein reductase] + O2 = (S)-1-hydroxy-N-methylcanadine + oxidized [NADPH--hemoprotein reductase] + H2O + H(+). It participates in alkaloid biosynthesis. In terms of biological role, cytochrome P450 involved in the biosynthesis of the benzylisoquinoline alkaloid noscapine. Converts (S)-N-methylcanadine to (S)-1-hydroxy-N-methylcanadine. The polypeptide is (S)-N-methylcanadine 1-hydroxylase CYP82Y1 (Papaver somniferum (Opium poppy)).